We begin with the raw amino-acid sequence, 466 residues long: Sucrose-6-phosphate hydrolase (466 aa).

Residues 38–41 (LLND), Q57, 100–101 (YS), 159–160 (RD), and E218 each bind substrate. The active site involves D41.

It localises to the cytoplasm. It carries out the reaction Hydrolysis of terminal non-reducing beta-D-fructofuranoside residues in beta-D-fructofuranosides.. The protein operates within glycan biosynthesis; sucrose metabolism. Hydrolyzes sucrose and sucrose-6P, but fails to hydrolyze any of the phosphorylated isomers of sucrose and other phospho-D-glucosides, including maltose-6'P and trehalose-6P. The sequence is that of Sucrose-6-phosphate hydrolase (scrB) from Klebsiella pneumoniae.